A 3535-amino-acid chain; its full sequence is Lysosomal-trafficking regulator (3535 aa).

The disordered stretch occupies residues 412-436 (MESSASTAMPKQQQHPRHKRQRSSQ). Residues 689 to 736 (TLSRRLIQLQLNSSDRASQLFQALLYKCSKHSRAKFWLDESSTPAKLE) form a WD 1 repeat. Residues 1066 to 1096 (STHQEPTGVVNSPSGDSQQPRPRARSFNSGS) show a composition bias toward polar residues. Disordered regions lie at residues 1066 to 1132 (STHQ…NAGV) and 1592 to 1613 (GEGQ…TLDG). Positions 1596–1610 (PTGRSPGSSSSSRST) are enriched in low complexity. Positions 2686-2784 (SLNSQILYNF…MREVFCDKIV (99 aa)) constitute a BEACH-type PH domain. Residues 2784–3081 (VATPDQSKVI…QLFKSPHPAS (298 aa)) enclose the BEACH domain. Residues 3254 to 3287 (GIGGGGSERVDEAGNLHPTSSASSVNSSSISSGG) form a disordered region. The segment covering 3273–3285 (SSASSVNSSSISS) has biased composition (low complexity). WD repeat units follow at residues 3307 to 3346 (RHTD…YVRT), 3442 to 3486 (VHED…FVSE), and 3489 to 3527 (TGTS…GNAP).

In terms of assembly, interacts with Rab5; the interaction is independent of GDP or GTP. Interacts with msps.

It localises to the vesicle. The protein resides in the cytoplasm. Its subcellular location is the cytoskeleton. It is found in the spindle. The protein localises to the spindle pole. Functionally, adapter protein that regulates intracellular membrane fusion reactions. Regulates the fusion of lysosome-related organelles. Promotes microtubules nucleation and centrosomal recruitment of microtubule nucleating proteins such as msps. In syncytial embryos, during the formation of yolk granules, suppresses vesicle fusion events with lipid droplets, possibly via interaction with Rab5. In the eye, regulates pigment granules size. In hemocytes, required for the late steps of bacteria phagocytosis. In fat body, required for autophagosome maturation. This is Lysosomal-trafficking regulator from Drosophila melanogaster (Fruit fly).